Reading from the N-terminus, the 236-residue chain is Uridylate kinase (236 aa).

10 to 13 contacts ATP; it reads KLSG. Glycine 52 serves as a coordination point for UMP. The ATP site is built by glycine 53 and arginine 57. Residues aspartate 72 and 133-140 each bind UMP; that span reads TGNPFFTT. The ATP site is built by threonine 160, tyrosine 166, and aspartate 169.

It belongs to the UMP kinase family. In terms of assembly, homohexamer.

It is found in the cytoplasm. It carries out the reaction UMP + ATP = UDP + ADP. The protein operates within pyrimidine metabolism; CTP biosynthesis via de novo pathway; UDP from UMP (UMPK route): step 1/1. Inhibited by UTP. In terms of biological role, catalyzes the reversible phosphorylation of UMP to UDP. The sequence is that of Uridylate kinase from Parabacteroides distasonis (strain ATCC 8503 / DSM 20701 / CIP 104284 / JCM 5825 / NCTC 11152).